Reading from the N-terminus, the 800-residue chain is Protein MEI2-like 5 (800 aa).

RRM domains are found at residues 168-241 and 253-326; these read RTLF…FSIP and GTLV…PSRP. Phosphoserine occurs at positions 384 and 390. Disordered stretches follow at residues 470-489 and 776-800; these read GSPNARSEPSSSSVWSTSST and VVDEESKNMDLLDSQLSDDDGRERS. A compositionally biased stretch (low complexity) spans 471–488; it reads SPNARSEPSSSSVWSTSS. Residues Ser789 and Ser792 each carry the phosphoserine modification.

Functionally, probable RNA-binding protein that plays a role in meiosis and vegetative growth. This Arabidopsis thaliana (Mouse-ear cress) protein is Protein MEI2-like 5 (ML5).